Reading from the N-terminus, the 284-residue chain is Trimeric intracellular cation channel type B-B (284 aa).

The Lumenal segment spans residues 1 to 15; that stretch reads MESLSEVSVQFSQLS. A helical transmembrane segment spans residues 16-32; sequence MFPFFDMAHYLASVMSA. Residues 33 to 44 lie on the Cytoplasmic side of the membrane; it reads REQAGALDIASH. Residues 45–68 form a helical membrane-spanning segment; it reads SPMASWFSAMLHCFGGGILSSILL. Residues 69-79 are Lumenal-facing; it reads AEPPVGILANT. The helical transmembrane segment at 80–99 threads the bilayer; it reads TNIMLASAIWYMVYYFPYDL. Topologically, residues 100 to 102 are cytoplasmic; the sequence is FYN. Residues 103–121 form a helical membrane-spanning segment; the sequence is CFFFLPIRLIAAGMKEVTR. 2 residues coordinate a 1,2-diacyl-sn-glycero-3-phospho-(1D-myo-inositol-4,5-bisphosphate): K117 and R121. Residues 122–139 lie on the Lumenal side of the membrane; it reads TWKILSGITHAHSHYKDA. A helical membrane pass occupies residues 140–157; it reads WLVMITIGWARGAGGGLI. Topologically, residues 158-178 are cytoplasmic; it reads SNFEQLVRGVWKPESNEFLKM. A helical transmembrane segment spans residues 179 to 196; the sequence is SYPVKVTLIGAVLFTLQH. At 197–204 the chain is on the lumenal side; it reads GHYLPISR. Residues 205–225 form a helical membrane-spanning segment; it reads HNLMFIYTMFLVSIKVTMMLT. Over 226 to 284 the chain is Cytoplasmic; the sequence is HSAGSPFLPLETPLHRILFGLRQNQAEVRESPSSSGAKGKPSKKTLDKDSGEQSNKKDK. The interval 250 to 284 is disordered; the sequence is QAEVRESPSSSGAKGKPSKKTLDKDSGEQSNKKDK. A compositionally biased stretch (basic and acidic residues) spans 269–284; it reads KTLDKDSGEQSNKKDK.

Belongs to the TMEM38 family. In terms of assembly, homotrimer; conformation seems to be controled by binding to diacylglycerol (DAG).

It is found in the endoplasmic reticulum membrane. It carries out the reaction K(+)(in) = K(+)(out). Its activity is regulated as follows. Channel activity is activated by increased cytosolic Ca(2+) levels and blocked by luminal high Ca(2+) levels. Intracellular monovalent cation channel required for maintenance of rapid intracellular calcium release. Acts as a potassium counter-ion channel that functions in synchronization with calcium release from intracellular stores. Activated by increased cytosolic Ca(2+) levels. The polypeptide is Trimeric intracellular cation channel type B-B (tmem38b-b) (Xenopus laevis (African clawed frog)).